Consider the following 440-residue polypeptide: Cytochrome c biogenesis protein Ccs1 (440 aa).

3 helical membrane-spanning segments follow: residues 19 to 39 (LRLAIWLLASIGILIALGTFI), 78 to 98 (NIWFFGIVGFFASSLLACTYT), and 164 to 184 (VGPILVHFSILFVLFGSACGA).

The protein belongs to the Ccs1/CcsB family. May interact with CcsA.

The protein localises to the plastid. The protein resides in the chloroplast thylakoid membrane. Functionally, required during biogenesis of c-type cytochromes (cytochrome c6 and cytochrome f) at the step of heme attachment. This Emiliania huxleyi (Coccolithophore) protein is Cytochrome c biogenesis protein Ccs1.